The chain runs to 317 residues: Insulin-like growth factor-binding protein 2 (317 aa).

Residues 1 to 33 form the signal peptide; sequence MQPRLGGPALLLLPPLLLLLLLGAGGGDCGARA. The 92-residue stretch at 35-126 folds into the IGFBP N-terminal domain; the sequence is VLFRCPPCTP…VHGEGTCEKH (92 aa). Cystine bridges form between Cys39–Cys76, Cys42–Cys78, Cys50–Cys79, Cys68–Cys82, Cys90–Cys103, and Cys97–Cys123. Disordered stretches follow at residues 125–151 and 189–218; these read KHGD…GGQV and EQHR…ARTP. One can recognise a Thyroglobulin type-1 domain in the interval 216 to 298; that stretch reads RTPCQQELDQ…APTIRGDPEC (83 aa). Disulfide bonds link Cys219–Cys253, Cys264–Cys275, and Cys277–Cys298. The Cell attachment site motif lies at 293 to 295; the sequence is RGD.

Interacts with IGF1. Interacts with IGF2. Interacts (via RGD motif) with integrin alpha5/ITGA5; this interaction induces cell migration, adhesion or apoptosis according to the context. Interacts with PTPRB; this interaction leads to PTPRB dimerization and inactivation. In terms of processing, cleaved by MMP9 leading to release of free IGF2 from IGFBP2-IGF2 complex, which contributes to enhance the motility and the growth of astrocytes. O-glycosylated. Expressed in abundance in selected adult tissues, namely liver, kidney, adrenal, pituitary and choroid plexus.

It is found in the secreted. Multifunctional protein that plays a critical role in regulating the availability of IGFs such as IGF1 and IGF2 to their receptors and thereby regulates IGF-mediated cellular processes including proliferation, differentiation, and apoptosis in a cell-type specific manner. Functions coordinately with receptor protein tyrosine phosphatase beta/PTPRB and the IGF1 receptor to regulate IGF1-mediated signaling by stimulating the phosphorylation of PTEN leading to its inactivation and AKT1 activation. Plays a positive role in cell migration via interaction with integrin alpha5/ITGA5 through an RGD motif. Additionally, interaction with ITGA5/ITGB1 enhances the adhesion of endothelial progenitor cells to endothelial cells. Upon mitochondrial damage, facilitates apoptosis with ITGA5 of podocytes, and then activates the phosphorylation of focal adhesion kinase (FAK)-mediated mitochondrial injury. This Ovis aries (Sheep) protein is Insulin-like growth factor-binding protein 2 (IGFBP2).